A 739-amino-acid polypeptide reads, in one-letter code: MDAARDGRPERRRAVSGTYRTHPFQRPSARRSAGRPARCGRRGRGAPRVRRPRPYFQRPPDEDTSEDENVYDYIDGDSSDSADDYDSDYFTANRGPNHGAGDAMDTDAPPERAPEGGAPQDYLTAHLRAIEVLPESAPHRSLLERTARTVYAQQFPPRDLSAGSKAPAQRARRSLRGFPRGGGGGQEPGPDDEGDDAADLREDLVPDEAYAHLERDERLSEGPPLLNMEAAAAAAGERSVVEELFTYAPAQPQVEVPLPRILEGRVRPSAFFAQMSLDALCRTPPNDQRVARERRAWEMAGTPHGLLITTWSTVDPEFSIGGMYVGAPEGTRPRLVWRRAMKQAMALQYRLGVGGLCRAVDGAACRPLRRCSFWRDALLRECATAIFCRGRGARAAPRRLPRPAVGLLAATQFTPPDASPHATLFRGSMGSLIYWHELRVMLTAVPALCARYAGAGLQSAELYLLALRHSEAPGYTANERYALSAYLTLFVALAERGLRWLYLAGAHLLGPHPTAAAFREVRAKIPYERLPLGSATLHDAEVETVDSATFQEALAFSALAHVYGEAYVAVRTATTLLMAEYAVHAERRDVRQMTAAFLGVGLIAQRLMGSLNLLLNCVAGAAVYGGRRVTVREGTLARYSLLADAALPLVRPVFLVEFREARDGVMRELRLRPVASPPLAGKRRVMELYLSLDSIEALVGREPLGSRPVLGPLVDIAEALADHPHLVTGDGRGPRLGGR.

Residues 1–13 (MDAARDGRPERRR) show a composition bias toward basic and acidic residues. Disordered regions lie at residues 1–123 (MDAA…QDYL) and 154–198 (QFPP…DDAA). The short motif at 10–30 (ERRRAVSGTYRTHPFQRPSAR) is the Nuclear localization signal element. Residues 28 to 53 (SARRSAGRPARCGRRGRGAPRVRRPR) are compositionally biased toward basic residues. The span at 62–87 (EDTSEDENVYDYIDGDSSDSADDYDS) shows a compositional bias: acidic residues. Residues 94–121 (RGPNHGAGDAMDTDAPPERAPEGGAPQD) carry the Nuclear export signal motif. The short motif at 483–493 (LSAYLTLFVAL) is the Nuclear export signal element.

The protein belongs to the alphaherpesvirinae HHV-1 UL47 family. Interacts with US3 kinase. Interacts with UL31 and UL34; these interactions seem important for efficient virion nuclear egress. Interacts with UL41/VHS. Interacts with host DDB1. Monoubiquitinated. In terms of processing, phosphorylated by US3. This phosphorylation is required for proper nuclear localization.

It localises to the virion tegument. It is found in the host nucleus. Its subcellular location is the host cytoplasm. Its function is as follows. Tegument protein that can bind to various RNA transcripts. Plays a role in the attenuation of selective viral and cellular mRNA degradation by modulating the activity of host shutoff RNase UL41/VHS. Also plays a role in the primary envelopment of virions in the perinuclear space, probably by interacting with two nuclear egress proteins UL31 and UL34. This is Tegument protein UL47 from Bovine herpesvirus 1.1 (strain Cooper) (BoHV-1).